We begin with the raw amino-acid sequence, 121 residues long: Large ribosomal subunit protein eL31 (121 aa).

This sequence belongs to the eukaryotic ribosomal protein eL31 family.

The polypeptide is Large ribosomal subunit protein eL31 (RPL31) (Perilla frutescens (Beefsteak mint)).